The primary structure comprises 79 residues: Small ribosomal subunit protein uS17 (79 aa).

This sequence belongs to the universal ribosomal protein uS17 family. Part of the 30S ribosomal subunit.

One of the primary rRNA binding proteins, it binds specifically to the 5'-end of 16S ribosomal RNA. The sequence is that of Small ribosomal subunit protein uS17 from Bartonella tribocorum (strain CIP 105476 / IBS 506).